Here is a 155-residue protein sequence, read N- to C-terminus: Arginine repressor (155 aa).

Belongs to the ArgR family.

Its subcellular location is the cytoplasm. Its pathway is amino-acid biosynthesis; L-arginine biosynthesis [regulation]. Functionally, regulates arginine biosynthesis genes. The sequence is that of Arginine repressor from Histophilus somni (strain 129Pt) (Haemophilus somnus).